A 493-amino-acid chain; its full sequence is Geraniol 8-hydroxylase (493 aa).

At 1–6 the chain is on the lumenal side; it reads MDYLTI. A helical membrane pass occupies residues 7 to 23; sequence ILTLLFALTLYEAFSYL. Over 24-493 the chain is Cytoplasmic; it reads SRRTKNLPPG…HPLRAVPSTL (470 aa). Cys-436 provides a ligand contact to heme.

It belongs to the cytochrome P450 family. The cofactor is heme. In terms of tissue distribution, expressed in roots, stems, leaves and flower buds. Hardly detected in mature flowers and fruits. Expressed in the internal phloem-associated parenchyma.

The protein resides in the endoplasmic reticulum membrane. The enzyme catalyses (2E)-geraniol + reduced [NADPH--hemoprotein reductase] + O2 = (6E)-8-hydroxygeraniol + oxidized [NADPH--hemoprotein reductase] + H2O + H(+). Functionally, hydroxylase involved in the biosynthesis of hydroxygeraniol, a precursor of the terpenoid indole alkaloids such as vinblastine and vincristine. Also able to hydroxylate in vitro nerol and to catalyze 3'-hydroxylation of the flavanone naringenin to form eriodictyol. No activity with apigenin, kaempferol, p-coumaric acid and ferulic acid as substrates. The polypeptide is Geraniol 8-hydroxylase (CYP76B6) (Catharanthus roseus (Madagascar periwinkle)).